Here is a 331-residue protein sequence, read N- to C-terminus: Lipoyl synthase (331 aa).

Cys57, Cys62, Cys68, Cys83, Cys87, Cys90, and Ser294 together coordinate [4Fe-4S] cluster. In terms of domain architecture, Radical SAM core spans 69 to 283 (WEDREATFLI…KAEAEAIGFL (215 aa)).

The protein belongs to the radical SAM superfamily. Lipoyl synthase family. It depends on [4Fe-4S] cluster as a cofactor.

Its subcellular location is the cytoplasm. It catalyses the reaction [[Fe-S] cluster scaffold protein carrying a second [4Fe-4S](2+) cluster] + N(6)-octanoyl-L-lysyl-[protein] + 2 oxidized [2Fe-2S]-[ferredoxin] + 2 S-adenosyl-L-methionine + 4 H(+) = [[Fe-S] cluster scaffold protein] + N(6)-[(R)-dihydrolipoyl]-L-lysyl-[protein] + 4 Fe(3+) + 2 hydrogen sulfide + 2 5'-deoxyadenosine + 2 L-methionine + 2 reduced [2Fe-2S]-[ferredoxin]. It functions in the pathway protein modification; protein lipoylation via endogenous pathway; protein N(6)-(lipoyl)lysine from octanoyl-[acyl-carrier-protein]: step 2/2. Its function is as follows. Catalyzes the radical-mediated insertion of two sulfur atoms into the C-6 and C-8 positions of the octanoyl moiety bound to the lipoyl domains of lipoate-dependent enzymes, thereby converting the octanoylated domains into lipoylated derivatives. The sequence is that of Lipoyl synthase from Clavibacter michiganensis subsp. michiganensis (strain NCPPB 382).